The sequence spans 153 residues: 3-hydroxyacyl-[acyl-carrier-protein] dehydratase FabZ (153 aa).

The active site involves H57.

The protein belongs to the thioester dehydratase family. FabZ subfamily.

It localises to the cytoplasm. The enzyme catalyses a (3R)-hydroxyacyl-[ACP] = a (2E)-enoyl-[ACP] + H2O. Involved in unsaturated fatty acids biosynthesis. Catalyzes the dehydration of short chain beta-hydroxyacyl-ACPs and long chain saturated and unsaturated beta-hydroxyacyl-ACPs. This Aeromonas salmonicida (strain A449) protein is 3-hydroxyacyl-[acyl-carrier-protein] dehydratase FabZ.